Reading from the N-terminus, the 1049-residue chain is Ataxin-2-like protein (1049 aa).

M1 carries the post-translational modification N-acetylmethionine. Residues 1-54 (MLKPQPPQQTSQPQQPPPTQQAVARRSPGGTSPPNGGLPGPLTATAAPPGPPAA) are disordered. S27 bears the Phosphoserine mark. At T45 the chain carries Phosphothreonine. The segment at 96 to 119 (SVRGQTTGKGPPQSPVFEGVYNNS) is interaction with MPL. Phosphoserine is present on S109. Y116 is modified (phosphotyrosine). The region spanning 120 to 197 (RMLHFLTAVV…VLLVHFRNVD (78 aa)) is the Sm domain. Residue K205 is modified to N6-acetyllysine. Residue S236 is modified to Phosphoserine. Residue Y262 is modified to Phosphotyrosine. S304 carries the post-translational modification Phosphoserine. Phosphotyrosine is present on Y307. Basic and acidic residues predominate over residues 314-326 (ENDDGRTEEEKHS). Disordered stretches follow at residues 314–522 (ENDD…RNLE), 554–573 (QFKL…FPSR), 578–704 (EAKG…LTAG), 736–772 (VSNS…PMMQ), 824–852 (SNPR…AEQP), 868–944 (HATQ…SSFP), and 999–1049 (PQGH…PPGN). A compositionally biased stretch (polar residues) spans 328–340 (VQRQGSGRESPSL). A phosphoserine mark is found at S333 and S337. K346 participates in a covalent cross-link: Glycyl lysine isopeptide (Lys-Gly) (interchain with G-Cter in SUMO2). A Phosphotyrosine modification is found at Y347. R359 carries the asymmetric dimethylarginine modification. The segment covering 361–378 (GVRCSSSRGGRPGLSSLP) has biased composition (low complexity). Residues S389, S407, and S453 each carry the phosphoserine modification. Residues 454–466 (PKSAAPAPVSASC) show a composition bias toward low complexity. Positions 475 to 487 (VASSASIPVTSSV) are enriched in polar residues. Residues S496 and S499 each carry the phosphoserine modification. Basic and acidic residues predominate over residues 508–519 (DVKELPTKEPSR). Phosphoserine occurs at positions 560, 561, and 562. Positions 578-587 (EAKGKEKEVD) are enriched in basic and acidic residues. The residue at position 597 (S597) is a Phosphoserine. T635 carries the post-translational modification Phosphothreonine. Phosphoserine is present on residues S637, S677, S683, and S687. Positions 681–697 (STSTPTSPGPRTHSTPS) are enriched in low complexity. Polar residues-rich tracts occupy residues 824-845 (SNPR…STPQ) and 878-902 (QPAT…QHQA). Positions 935-944 (SAQSPQSSFP) are enriched in low complexity. A compositionally biased stretch (polar residues) spans 1033 to 1042 (QVQSHPSQQL).

This sequence belongs to the ataxin-2 family. In terms of assembly, interacts with MPL/TPOR and EPOR and dissociates after ligand stimulation. Interacts with DDX6, G3BP, and ATXN2. Interacts with PRMT1. Interacts with CIC and ATXN1. Post-translationally, thrombopoietin triggers the phosphorylation on tyrosine residues in a way that is dependent on MPL C-terminal domain. Asymmetrically dimethylated. Probably methylated by PRMT1. As to expression, expressed in cerebellum.

The protein localises to the membrane. It is found in the cytoplasm. It localises to the nucleus speckle. Its subcellular location is the cytoplasmic granule. Involved in the regulation of stress granule and P-body formation. The chain is Ataxin-2-like protein (Atxn2l) from Mus musculus (Mouse).